The following is a 154-amino-acid chain: 6,7-dimethyl-8-ribityllumazine synthase (154 aa).

5-amino-6-(D-ribitylamino)uracil is bound by residues Phe22, 56–58 (AFE), and 80–82 (AVI). 85-86 (AT) serves as a coordination point for (2S)-2-hydroxy-3-oxobutyl phosphate. His88 acts as the Proton donor in catalysis. Phe113 provides a ligand contact to 5-amino-6-(D-ribitylamino)uracil. Arg127 contacts (2S)-2-hydroxy-3-oxobutyl phosphate.

The protein belongs to the DMRL synthase family.

The enzyme catalyses (2S)-2-hydroxy-3-oxobutyl phosphate + 5-amino-6-(D-ribitylamino)uracil = 6,7-dimethyl-8-(1-D-ribityl)lumazine + phosphate + 2 H2O + H(+). It participates in cofactor biosynthesis; riboflavin biosynthesis; riboflavin from 2-hydroxy-3-oxobutyl phosphate and 5-amino-6-(D-ribitylamino)uracil: step 1/2. In terms of biological role, catalyzes the formation of 6,7-dimethyl-8-ribityllumazine by condensation of 5-amino-6-(D-ribitylamino)uracil with 3,4-dihydroxy-2-butanone 4-phosphate. This is the penultimate step in the biosynthesis of riboflavin. The sequence is that of 6,7-dimethyl-8-ribityllumazine synthase from Clostridium botulinum (strain ATCC 19397 / Type A).